Consider the following 425-residue polypeptide: Histidine--tRNA ligase (425 aa).

Belongs to the class-II aminoacyl-tRNA synthetase family. As to quaternary structure, homodimer.

Its subcellular location is the cytoplasm. The catalysed reaction is tRNA(His) + L-histidine + ATP = L-histidyl-tRNA(His) + AMP + diphosphate + H(+). In Desulforapulum autotrophicum (strain ATCC 43914 / DSM 3382 / VKM B-1955 / HRM2) (Desulfobacterium autotrophicum), this protein is Histidine--tRNA ligase.